The primary structure comprises 262 residues: 14-3-3-like protein B (262 aa).

This sequence belongs to the 14-3-3 family.

The protein is 14-3-3-like protein B of Hordeum vulgare (Barley).